The primary structure comprises 425 residues: Probable threonylcarbamoyladenosine tRNA methylthiotransferase (425 aa).

Residues 2–110 (VKIYIENYGC…IIQAVEYALR (109 aa)) enclose the MTTase N-terminal domain. [4Fe-4S] cluster contacts are provided by Cys11, Cys47, Cys76, Cys148, Cys152, and Cys155. The region spanning 133–363 (LSPRTVYFIV…HRIRLQISYE (231 aa)) is the Radical SAM core domain. The 60-residue stretch at 366–425 (QKYIGKKVEVLIHGEGKKGNVDAVTMNYKHVILPFGNSGEFRIAEIKNATSTYLLGEVMS) folds into the TRAM domain.

The protein belongs to the methylthiotransferase family. CDKAL1 subfamily. [4Fe-4S] cluster serves as cofactor.

It carries out the reaction N(6)-L-threonylcarbamoyladenosine(37) in tRNA + (sulfur carrier)-SH + AH2 + 2 S-adenosyl-L-methionine = 2-methylsulfanyl-N(6)-L-threonylcarbamoyladenosine(37) in tRNA + (sulfur carrier)-H + 5'-deoxyadenosine + L-methionine + A + S-adenosyl-L-homocysteine + 2 H(+). Its function is as follows. Catalyzes the methylthiolation of N6-threonylcarbamoyladenosine (t(6)A), leading to the formation of 2-methylthio-N6-threonylcarbamoyladenosine (ms(2)t(6)A) at position 37 in tRNAs that read codons beginning with adenine. The chain is Probable threonylcarbamoyladenosine tRNA methylthiotransferase from Pyrococcus abyssi (strain GE5 / Orsay).